Reading from the N-terminus, the 198-residue chain is FMN-dependent NADH:quinone oxidoreductase (198 aa).

Residues Ser10 and 16 to 18 (SIS) contribute to the FMN site.

The protein belongs to the azoreductase type 1 family. As to quaternary structure, homodimer. It depends on FMN as a cofactor.

The enzyme catalyses 2 a quinone + NADH + H(+) = 2 a 1,4-benzosemiquinone + NAD(+). The catalysed reaction is N,N-dimethyl-1,4-phenylenediamine + anthranilate + 2 NAD(+) = 2-(4-dimethylaminophenyl)diazenylbenzoate + 2 NADH + 2 H(+). Quinone reductase that provides resistance to thiol-specific stress caused by electrophilic quinones. Functionally, also exhibits azoreductase activity. Catalyzes the reductive cleavage of the azo bond in aromatic azo compounds to the corresponding amines. The chain is FMN-dependent NADH:quinone oxidoreductase from Mycoplasmopsis pulmonis (strain UAB CTIP) (Mycoplasma pulmonis).